The primary structure comprises 427 residues: 3-phosphoshikimate 1-carboxyvinyltransferase (427 aa).

Positions 22, 23, and 27 each coordinate 3-phosphoshikimate. Position 22 (Lys22) interacts with phosphoenolpyruvate. Phosphoenolpyruvate contacts are provided by Gly96 and Arg124. The 3-phosphoshikimate site is built by Ser169, Ser170, Gln171, Ser197, Asp313, Asn336, and Lys340. Gln171 provides a ligand contact to phosphoenolpyruvate. Asp313 functions as the Proton acceptor in the catalytic mechanism. Residues Arg344, Arg386, and Lys411 each contribute to the phosphoenolpyruvate site.

This sequence belongs to the EPSP synthase family. As to quaternary structure, monomer.

Its subcellular location is the cytoplasm. It catalyses the reaction 3-phosphoshikimate + phosphoenolpyruvate = 5-O-(1-carboxyvinyl)-3-phosphoshikimate + phosphate. Its pathway is metabolic intermediate biosynthesis; chorismate biosynthesis; chorismate from D-erythrose 4-phosphate and phosphoenolpyruvate: step 6/7. Its function is as follows. Catalyzes the transfer of the enolpyruvyl moiety of phosphoenolpyruvate (PEP) to the 5-hydroxyl of shikimate-3-phosphate (S3P) to produce enolpyruvyl shikimate-3-phosphate and inorganic phosphate. In Salmonella arizonae (strain ATCC BAA-731 / CDC346-86 / RSK2980), this protein is 3-phosphoshikimate 1-carboxyvinyltransferase.